Here is a 612-residue protein sequence, read N- to C-terminus: Zinc metalloproteinase-disintegrin-like 8 (612 aa).

The N-terminal stretch at 1–20 is a signal peptide; that stretch reads MIQVLLVTICLAVFPYQGSS. Positions 21–189 are excised as a propeptide; it reads IILGSGNVND…KKASQLNLTP (169 aa). Residues 199-395 form the Peptidase M12B domain; that stretch reads KYIELVIVAD…NRPPCILNKP (197 aa). A Ca(2+)-binding site is contributed by glutamate 202. Asparagine 218 carries an N-linked (GlcNAc...) asparagine glycan. Aspartate 286 contributes to the Ca(2+) binding site. Cystine bridges form between cysteine 310-cysteine 390, cysteine 350-cysteine 374, and cysteine 352-cysteine 357. Histidine 335 lines the Zn(2+) pocket. The active site involves glutamate 336. The Zn(2+) site is built by histidine 339 and histidine 345. Ca(2+) is bound by residues cysteine 390, asparagine 393, valine 405, asparagine 408, phenylalanine 410, glutamate 412, glutamate 415, and aspartate 418. The Disintegrin domain occupies 403–489; the sequence is PPVCGNYFVE…DCPTDDFQRN (87 aa). 14 disulfides stabilise this stretch: cysteine 406–cysteine 435, cysteine 417–cysteine 430, cysteine 419–cysteine 425, cysteine 429–cysteine 452, cysteine 443–cysteine 449, cysteine 448–cysteine 474, cysteine 461–cysteine 481, cysteine 468–cysteine 500, cysteine 493–cysteine 505, cysteine 512–cysteine 562, cysteine 527–cysteine 573, cysteine 540–cysteine 550, cysteine 557–cysteine 599, and cysteine 593–cysteine 605. The short motif at 467-469 is the D/ECD-tripeptide element; it reads ECD. An N-linked (GlcNAc...) asparagine glycan is attached at asparagine 502.

The protein belongs to the venom metalloproteinase (M12B) family. P-III subfamily. Requires Zn(2+) as cofactor. As to expression, expressed by the venom gland.

Its subcellular location is the secreted. Its function is as follows. Snake venom metalloproteinase that impairs hemostasis in the envenomed animal. The protein is Zinc metalloproteinase-disintegrin-like 8 of Crotalus adamanteus (Eastern diamondback rattlesnake).